We begin with the raw amino-acid sequence, 387 residues long: Lipid-A-disaccharide synthase (387 aa).

Belongs to the LpxB family.

The catalysed reaction is a lipid X + a UDP-2-N,3-O-bis[(3R)-3-hydroxyacyl]-alpha-D-glucosamine = a lipid A disaccharide + UDP + H(+). It functions in the pathway bacterial outer membrane biogenesis; LPS lipid A biosynthesis. Its function is as follows. Condensation of UDP-2,3-diacylglucosamine and 2,3-diacylglucosamine-1-phosphate to form lipid A disaccharide, a precursor of lipid A, a phosphorylated glycolipid that anchors the lipopolysaccharide to the outer membrane of the cell. This Glaesserella parasuis serovar 5 (strain SH0165) (Haemophilus parasuis) protein is Lipid-A-disaccharide synthase.